The following is an 80-amino-acid chain: Protein Vpu (80 aa).

Over Met1 to Leu7 the chain is Extracellular. Residues Ala8 to Ile28 traverse the membrane as a helical segment. Topologically, residues Glu29–Leu80 are cytoplasmic. Residues Arg49 to Leu80 form a disordered region. A phosphoserine; by host CK2 mark is found at Ser53 and Ser57. The span at Ser53 to Ala65 shows a compositional bias: acidic residues.

It belongs to the HIV-1 VPU protein family. In terms of assembly, homopentamer. Interacts with host CD4 and BRTC; these interactions induce proteasomal degradation of CD4. Interacts with host BST2; this interaction leads to the degradation of host BST2. Interacts with host FBXW11. Interacts with host AP1M1; this interaction plays a role in the mistrafficking and subsequent degradation of host BST2. Interacts with host RANBP2; this interaction allows Vpu to down-regulate host BLM sumoylation. In terms of processing, phosphorylated by host CK2. This phosphorylation is necessary for interaction with human BTRC and degradation of CD4.

Its subcellular location is the host membrane. Ion channel activity is inhibited by hexamethylene amiloride in vitro. In terms of biological role, enhances virion budding by targeting host CD4 and Tetherin/BST2 to proteasome degradation. Degradation of CD4 prevents any unwanted premature interactions between viral Env and its host receptor CD4 in the endoplasmic reticulum. Degradation of antiretroviral protein Tetherin/BST2 is important for virion budding, as BST2 tethers new viral particles to the host cell membrane. Mechanistically, Vpu bridges either CD4 or BST2 to BTRC, a substrate recognition subunit of the Skp1/Cullin/F-box protein E3 ubiquitin ligase, induces their ubiquitination and subsequent proteasomal degradation. The alteration of the E3 ligase specificity by Vpu seems to promote the degradation of host IKBKB, leading to NF-kappa-B down-regulation and subsequent apoptosis. Acts as a viroporin that forms an oligomeric ion channel in membranes. Modulates the host DNA repair mechanisms to promote degradation of nuclear viral cDNA in cells that are already productively infected in order to suppress immune sensing and proviral hyper-integration (superinfection). Manipulates PML-NBs and modulates SUMOylation of host BLM protein thereby enhancing its DNA-end processing activity toward viral unintegrated linear DNA. Also inhibits RAD52-mediated homologous repair of viral cDNA, preventing the generation of dead-end circular forms of single copies of the long terminal repeat and permitting sustained nucleolytic attack. This is Protein Vpu from Human immunodeficiency virus type 1 group M subtype B (strain 89.6) (HIV-1).